A 164-amino-acid polypeptide reads, in one-letter code: Phosphopantetheine adenylyltransferase (164 aa).

Residue serine 9 coordinates substrate. ATP contacts are provided by residues serine 9–phenylalanine 10 and histidine 17. Positions 41, 73, and 87 each coordinate substrate. ATP is bound by residues glycine 88–arginine 90, glutamate 98, and tyrosine 123–serine 129.

It belongs to the bacterial CoaD family. Homohexamer. It depends on Mg(2+) as a cofactor.

Its subcellular location is the cytoplasm. It carries out the reaction (R)-4'-phosphopantetheine + ATP + H(+) = 3'-dephospho-CoA + diphosphate. It participates in cofactor biosynthesis; coenzyme A biosynthesis; CoA from (R)-pantothenate: step 4/5. Its function is as follows. Reversibly transfers an adenylyl group from ATP to 4'-phosphopantetheine, yielding dephospho-CoA (dPCoA) and pyrophosphate. The protein is Phosphopantetheine adenylyltransferase of Clostridium botulinum (strain 657 / Type Ba4).